A 391-amino-acid polypeptide reads, in one-letter code: MELWTHPTPAAPRLATSTRTRWRRTSRCSQPWATTPGTNSSDASRTPTTASASATSKPQSASARARSVRRSPDCTPRAWSRGARKDRGATTNRPRRPKFCSKRSTTCEATMSNDNETMVADRDPEETREMVRERYAGIATSGQDCCGDVGLDVSGDGGCCSDETEASGSERLGYDADDVASVADGADLGLGCGNPKAFAAMAPGETVLDLGSGAGFDCFLAAQEVGPDGHVIGVDMTPEMISKARENVAKNDAENVEFRLGEIGHLPVADESVNVVISNCVVNLAPEKQRVFDDTYRVLRPGGRVAISDVVQTAPFPDDVQMDPDSLTGCVAGASTVDDLKAMLDEAGFEAVEIAPKDESTEFISDWDADRDLGEYLVSATIEARKPARDD.

The interval 1–126 (MELWTHPTPA…TMVADRDPEE (126 aa)) is disordered. A compositionally biased stretch (polar residues) spans 28–39 (CSQPWATTPGTN). Positions 40–65 (SSDASRTPTTASASATSKPQSASARA) are enriched in low complexity. Residues 102–116 (KRSTTCEATMSNDNE) show a composition bias toward polar residues.

It belongs to the methyltransferase superfamily. Arsenite methyltransferase family.

It carries out the reaction arsenic triglutathione + [thioredoxin]-dithiol + S-adenosyl-L-methionine + 2 H2O = methylarsonous acid + [thioredoxin]-disulfide + 3 glutathione + S-adenosyl-L-homocysteine + H(+). It catalyses the reaction arsenic triglutathione + 2 [thioredoxin]-dithiol + 2 S-adenosyl-L-methionine + H2O = dimethylarsinous acid + 2 [thioredoxin]-disulfide + 3 glutathione + 2 S-adenosyl-L-homocysteine + 2 H(+). The catalysed reaction is arsenic triglutathione + 3 [thioredoxin]-dithiol + 3 S-adenosyl-L-methionine = trimethylarsine + 3 [thioredoxin]-disulfide + 3 glutathione + 3 S-adenosyl-L-homocysteine + 3 H(+). Functionally, catalyzes the transfer of a methyl group from AdoMet to arsenite, producing methylated arsenicals. The protein is Arsenite methyltransferase of Halobacterium salinarum (strain ATCC 700922 / JCM 11081 / NRC-1) (Halobacterium halobium).